Here is a 504-residue protein sequence, read N- to C-terminus: Maturase K (504 aa).

The protein belongs to the intron maturase 2 family. MatK subfamily.

It localises to the plastid. It is found in the chloroplast. Usually encoded in the trnK tRNA gene intron. Probably assists in splicing its own and other chloroplast group II introns. This is Maturase K from Fagus crenata (Japanese beech).